Reading from the N-terminus, the 421-residue chain is D-amino acid dehydrogenase (421 aa).

Residue 3–17 (VIVLGSGVIGVASAY) coordinates FAD.

The protein belongs to the DadA oxidoreductase family. The cofactor is FAD.

The catalysed reaction is a D-alpha-amino acid + A + H2O = a 2-oxocarboxylate + AH2 + NH4(+). It participates in amino-acid degradation; D-alanine degradation; NH(3) and pyruvate from D-alanine: step 1/1. Functionally, oxidative deamination of D-amino acids. In Acinetobacter baumannii (strain SDF), this protein is D-amino acid dehydrogenase.